A 121-amino-acid chain; its full sequence is Large ribosomal subunit protein uL18 (121 aa).

This sequence belongs to the universal ribosomal protein uL18 family. In terms of assembly, part of the 50S ribosomal subunit; part of the 5S rRNA/L5/L18/L25 subcomplex. Contacts the 5S and 23S rRNAs.

Functionally, this is one of the proteins that bind and probably mediate the attachment of the 5S RNA into the large ribosomal subunit, where it forms part of the central protuberance. In Paraburkholderia phymatum (strain DSM 17167 / CIP 108236 / LMG 21445 / STM815) (Burkholderia phymatum), this protein is Large ribosomal subunit protein uL18.